Here is an 849-residue protein sequence, read N- to C-terminus: Mechanosensitive ion channel protein 7 (849 aa).

The tract at residues 1–49 (MEFRKPFKSHSSYKQIISTGDQNEKTKKKKKLANLDDGDIAKTQSSGSS) is disordered. The segment covering 9-21 (SHSSYKQIISTGD) has biased composition (polar residues). The next 6 membrane-spanning stretches (helical) occupy residues 231 to 251 (AITL…VLSL), 274 to 294 (LVLI…VFFI), 313 to 333 (TAVQ…FLFD), 344 to 364 (VLLL…LWLI), 606 to 626 (MISF…LEIA), and 642 to 662 (AFMF…LFII).

This sequence belongs to the MscS (TC 1.A.23) family.

The protein localises to the membrane. Functionally, mechanosensitive channel that opens in response to stretch forces in the membrane lipid bilayer. The chain is Mechanosensitive ion channel protein 7 (MSL7) from Arabidopsis thaliana (Mouse-ear cress).